Consider the following 391-residue polypeptide: Tryptophan synthase beta chain (391 aa).

At Lys-84 the chain carries N6-(pyridoxal phosphate)lysine.

This sequence belongs to the TrpB family. Tetramer of two alpha and two beta chains. The cofactor is pyridoxal 5'-phosphate.

The enzyme catalyses (1S,2R)-1-C-(indol-3-yl)glycerol 3-phosphate + L-serine = D-glyceraldehyde 3-phosphate + L-tryptophan + H2O. Its pathway is amino-acid biosynthesis; L-tryptophan biosynthesis; L-tryptophan from chorismate: step 5/5. Its function is as follows. The beta subunit is responsible for the synthesis of L-tryptophan from indole and L-serine. This chain is Tryptophan synthase beta chain, found in Thermoanaerobacter sp. (strain X514).